A 222-amino-acid chain; its full sequence is ATP-dependent dethiobiotin synthetase BioD (222 aa).

12–17 (DVGKTF) is an ATP binding site. Residue threonine 16 coordinates Mg(2+). Lysine 37 is an active-site residue. Residue serine 41 coordinates substrate. ATP-binding positions include aspartate 54 and 113–116 (EGAG). Mg(2+)-binding residues include aspartate 54 and glutamate 113.

Belongs to the dethiobiotin synthetase family. As to quaternary structure, homodimer. Mg(2+) is required as a cofactor.

It is found in the cytoplasm. It catalyses the reaction (7R,8S)-7,8-diammoniononanoate + CO2 + ATP = (4R,5S)-dethiobiotin + ADP + phosphate + 3 H(+). The protein operates within cofactor biosynthesis; biotin biosynthesis; biotin from 7,8-diaminononanoate: step 1/2. In terms of biological role, catalyzes a mechanistically unusual reaction, the ATP-dependent insertion of CO2 between the N7 and N8 nitrogen atoms of 7,8-diaminopelargonic acid (DAPA, also called 7,8-diammoniononanoate) to form a ureido ring. The chain is ATP-dependent dethiobiotin synthetase BioD from Anoxybacillus flavithermus (strain DSM 21510 / WK1).